Here is a 328-residue protein sequence, read N- to C-terminus: D-cysteine desulfhydrase (328 aa).

Lys-51 is modified (N6-(pyridoxal phosphate)lysine).

The protein belongs to the ACC deaminase/D-cysteine desulfhydrase family. As to quaternary structure, homodimer. Pyridoxal 5'-phosphate is required as a cofactor.

The catalysed reaction is D-cysteine + H2O = hydrogen sulfide + pyruvate + NH4(+) + H(+). Its function is as follows. Catalyzes the alpha,beta-elimination reaction of D-cysteine and of several D-cysteine derivatives. It could be a defense mechanism against D-cysteine. The protein is D-cysteine desulfhydrase of Escherichia coli O9:H4 (strain HS).